Reading from the N-terminus, the 185-residue chain is Orotate phosphoribosyltransferase (185 aa).

5-phospho-alpha-D-ribose 1-diphosphate contacts are provided by residues R99, K100, K103, and 125 to 133; that span reads EDVTTTGGS. Positions 129 and 157 each coordinate orotate.

It belongs to the purine/pyrimidine phosphoribosyltransferase family. PyrE subfamily. As to quaternary structure, homodimer. The cofactor is Mg(2+).

It carries out the reaction orotidine 5'-phosphate + diphosphate = orotate + 5-phospho-alpha-D-ribose 1-diphosphate. Its pathway is pyrimidine metabolism; UMP biosynthesis via de novo pathway; UMP from orotate: step 1/2. In terms of biological role, catalyzes the transfer of a ribosyl phosphate group from 5-phosphoribose 1-diphosphate to orotate, leading to the formation of orotidine monophosphate (OMP). The protein is Orotate phosphoribosyltransferase of Methanococcus maripaludis (strain DSM 14266 / JCM 13030 / NBRC 101832 / S2 / LL).